The chain runs to 492 residues: Probable cytosol aminopeptidase (492 aa).

2 residues coordinate Mn(2+): lysine 262 and aspartate 267. The active site involves lysine 274. Mn(2+) is bound by residues aspartate 286, aspartate 345, and glutamate 347. Arginine 349 is a catalytic residue.

The protein belongs to the peptidase M17 family. Mn(2+) serves as cofactor.

It is found in the cytoplasm. The catalysed reaction is Release of an N-terminal amino acid, Xaa-|-Yaa-, in which Xaa is preferably Leu, but may be other amino acids including Pro although not Arg or Lys, and Yaa may be Pro. Amino acid amides and methyl esters are also readily hydrolyzed, but rates on arylamides are exceedingly low.. It catalyses the reaction Release of an N-terminal amino acid, preferentially leucine, but not glutamic or aspartic acids.. Presumably involved in the processing and regular turnover of intracellular proteins. Catalyzes the removal of unsubstituted N-terminal amino acids from various peptides. This chain is Probable cytosol aminopeptidase, found in Acaryochloris marina (strain MBIC 11017).